The following is a 331-amino-acid chain: Meiotic recombination protein P22 (331 aa).

Positions 132–187 are disordered; the sequence is NNIQKEVHQRNSQRRSIQCTPKKRGRKPKQPAKKLQSRISTDQLGSTPSPSKLPAK. The segment covering 152–167 has biased composition (basic residues); the sequence is PKKRGRKPKQPAKKLQ. The segment covering 168–181 has biased composition (polar residues); sequence SRISTDQLGSTPSP.

Belongs to the TOP6B-like family.

The protein resides in the chromosome. Functionally, required for formation of the mei-W68-mediated double-strand breaks (DSBs) that initiate meiotic recombination. The protein is Meiotic recombination protein P22 of Drosophila melanogaster (Fruit fly).